The primary structure comprises 243 residues: Sugar fermentation stimulation protein homolog (243 aa).

The protein belongs to the SfsA family.

This Bdellovibrio bacteriovorus (strain ATCC 15356 / DSM 50701 / NCIMB 9529 / HD100) protein is Sugar fermentation stimulation protein homolog.